A 680-amino-acid polypeptide reads, in one-letter code: uncharacterized protein (680 aa).

It belongs to the HyuA family.

This is an uncharacterized protein from Methanocaldococcus jannaschii (strain ATCC 43067 / DSM 2661 / JAL-1 / JCM 10045 / NBRC 100440) (Methanococcus jannaschii).